We begin with the raw amino-acid sequence, 340 residues long: Organic solute transporter subunit alpha (340 aa).

Residues 1 to 52 (MEPDRTQIRLDPRYTADLLEILKTNYSVPSACFSYPPTAAQLLRALGPVDIS) lie on the Extracellular side of the membrane. N-linked (GlcNAc...) asparagine glycosylation occurs at asparagine 25. Residues 53 to 73 (LMVIMTLFVLGSIAIFLEAAV) form a helical membrane-spanning segment. Residues 74 to 87 (YLHKNTRCPIKRKT) lie on the Cytoplasmic side of the membrane. Residues 88 to 108 (LIWCSSSPTIVSAFSCFGLWI) traverse the membrane as a helical segment. Residues 109 to 110 (PR) lie on the Extracellular side of the membrane. Residues 111-131 (ALTLVEMAITTFYSMCFYLLM) form a helical membrane-spanning segment. Residues 132–186 (QAMVEGFGGKEAVLRTLKDTPVMIHTGPCCCCCPCCPRIKITRKRLQLLLLGPIQ) are Cytoplasmic-facing. Residues 187–207 (YAFFKISLTLVGLFLIPDGIF) form a helical membrane-spanning segment. Residues 208–219 (DPSDISEGSTAL) are Extracellular-facing. The helical transmembrane segment at 220–240 (WINTFLGVSTLSALWTIGIIF) threads the bilayer. Residues 241-255 (RQARLHLGEQNIGAK) lie on the Cytoplasmic side of the membrane. Residues 256 to 276 (FVLFQALLILSALQPSIFSVL) traverse the membrane as a helical segment. Residues 277 to 295 (ASGGQIACSPPFSSKIRSQ) lie on the Extracellular side of the membrane. Residues 296–316 (VMNCHLLILESFLITVLTRIY) traverse the membrane as a helical segment. Topologically, residues 317–340 (YRRKDDKLGYEPFSSPDQDLNLKA) are cytoplasmic. Serine 330 is subject to Phosphoserine.

It belongs to the OST-alpha family. In terms of assembly, interacts with SLC51B. The Ost-alpha/Ost-beta complex is a heterodimer composed of alpha (SLC51A) and beta (SLC51B) subunit.

It is found in the cell membrane. The protein localises to the endoplasmic reticulum membrane. It catalyses the reaction taurocholate(out) = taurocholate(in). It carries out the reaction estrone 3-sulfate(out) = estrone 3-sulfate(in). The enzyme catalyses dehydroepiandrosterone 3-sulfate(out) = dehydroepiandrosterone 3-sulfate(in). The catalysed reaction is tauroursodeoxycholate(out) = tauroursodeoxycholate(in). It catalyses the reaction glycoursodeoxycholate(out) = glycoursodeoxycholate(in). It carries out the reaction glycocholate(out) = glycocholate(in). The enzyme catalyses taurochenodeoxycholate(out) = taurochenodeoxycholate(in). The catalysed reaction is glycochenodeoxycholate(out) = glycochenodeoxycholate(in). It catalyses the reaction taurodeoxycholate(out) = taurodeoxycholate(in). It carries out the reaction glycodeoxycholate(out) = glycodeoxycholate(in). The enzyme catalyses prostaglandin E2(out) = prostaglandin E2(in). In terms of biological role, essential component of the Ost-alpha/Ost-beta complex, a heterodimer that acts as the intestinal basolateral transporter responsible for bile acid export from enterocytes into portal blood. Efficiently transports the major species of bile acids (taurocholate). Taurine conjugates are transported more efficiently across the basolateral membrane than glycine-conjugated bile acids. Can also transport steroids such as estrone 3-sulfate and dehydroepiandrosterone 3-sulfate, therefore playing a role in the enterohepatic circulation of sterols. Able to transport eicosanoids such as prostaglandin E2. In Bos taurus (Bovine), this protein is Organic solute transporter subunit alpha (SLC51A).